Consider the following 641-residue polypeptide: Tetracycline resistance protein TetQ (641 aa).

Positions 1–244 (MNIINLGILA…AITSFILPPA (244 aa)) constitute a tr-type G domain. GTP contacts are provided by residues 10–17 (AHIDAGKT), 74–78 (DTPGH), and 128–131 (NKID).

The protein belongs to the TRAFAC class translation factor GTPase superfamily. Classic translation factor GTPase family. TetM/TetO subfamily.

Functionally, abolishes the inhibitory effect of tetracyclin on protein synthesis by a non-covalent modification of the ribosomes. This Bacteroides thetaiotaomicron protein is Tetracycline resistance protein TetQ (tetQ).